The primary structure comprises 1031 residues: Beta-galactosidase (1031 aa).

2 residues coordinate substrate: N100 and D198. A Na(+)-binding site is contributed by D198. Positions 412, 414, and 457 each coordinate Mg(2+). Residues E457 and 533-536 (EYAH) contribute to the substrate site. E457 acts as the Proton donor in catalysis. The active-site Nucleophile is the E533. Position 593 (N593) interacts with Mg(2+). Positions 597 and 600 each coordinate Na(+). Substrate-binding residues include N600 and W1005.

It belongs to the glycosyl hydrolase 2 family. As to quaternary structure, homotetramer. Requires Mg(2+) as cofactor. The cofactor is Na(+).

The catalysed reaction is Hydrolysis of terminal non-reducing beta-D-galactose residues in beta-D-galactosides.. In Vibrio vulnificus (strain YJ016), this protein is Beta-galactosidase.